Reading from the N-terminus, the 434-residue chain is Enolase A (434 aa).

The substrate site is built by His160 and Glu169. The Proton donor role is filled by Glu212. Residues Asp247, Glu296, and Asp321 each coordinate Mg(2+). Substrate-binding residues include Glu296 and Asp321. The Proton acceptor role is filled by Lys346. Substrate contacts are provided by residues 373–376 (SHRS) and Lys397.

It belongs to the enolase family. In terms of assembly, homodimer. Mg(2+) serves as cofactor.

It is found in the cytoplasm. The catalysed reaction is (2R)-2-phosphoglycerate = phosphoenolpyruvate + H2O. It functions in the pathway carbohydrate degradation; glycolysis; pyruvate from D-glyceraldehyde 3-phosphate: step 4/5. This chain is Enolase A (enoA), found in Dictyostelium discoideum (Social amoeba).